Consider the following 341-residue polypeptide: NADH-ubiquinone oxidoreductase chain 2 (341 aa).

The next 9 helical transmembrane spans lie at 8–28, 61–81, 95–115, 145–165, 174–191, 195–215, 238–258, 272–292, and 321–341; these read IFLI…SWLG, FLTQ…LMFL, ILIL…FWFP, FIYN…SLGG, LMAF…LAMM, MLWM…VLMF, LLIF…GFLP, LFIL…YLRL, and LIFN…YIIM.

This sequence belongs to the complex I subunit 2 family.

It is found in the mitochondrion inner membrane. It catalyses the reaction a ubiquinone + NADH + 5 H(+)(in) = a ubiquinol + NAD(+) + 4 H(+)(out). Its function is as follows. Core subunit of the mitochondrial membrane respiratory chain NADH dehydrogenase (Complex I) that is believed to belong to the minimal assembly required for catalysis. Complex I functions in the transfer of electrons from NADH to the respiratory chain. The immediate electron acceptor for the enzyme is believed to be ubiquinone. This Anopheles gambiae (African malaria mosquito) protein is NADH-ubiquinone oxidoreductase chain 2 (mt:ND2).